Consider the following 340-residue polypeptide: Cytochrome c oxidase subunit 1 (340 aa).

A helical membrane pass occupies residues 18 to 38 (MCYLLVAILCGFLGYIYSLFI). Glu-41 and Gly-46 together coordinate Ca(2+). A helical membrane pass occupies residues 42-62 (LSIIGCGVLFGDYQYYNVLVT). His-64 lines the Fe(II)-heme a pocket. Helical transmembrane passes span 66–86 (LVMVFAFIMPVMMGGLVNYFV), 100–120 (LNNMSFWMFMGGFGALVSGLL), 148–168 (FTVFAVHLLGVSSILNSINLL), 186–206 (LFIWGSLITALLLIITLPVLA), 237–257 (LFWFFGHPEVYIIIIPVFGLI), 279–299 (MILIAILGFFVWAHHMFVVGM), and 305–325 (AYFGSVTVLIGLPTCIKLFNW). Residue His-243 coordinates Cu cation. Positions 243 to 247 (HPEVY) form a cross-link, 1'-histidyl-3'-tyrosine (His-Tyr). Tyr-247 contributes to the O2 binding site. Cu cation is bound by residues His-292 and His-293.

It belongs to the heme-copper respiratory oxidase family. As to quaternary structure, component of the cytochrome c oxidase (complex IV, CIV), a multisubunit enzyme composed of a catalytic core of 3 subunits and several supernumerary subunits. The complex exists as a monomer or a dimer and forms supercomplexes (SCs) in the inner mitochondrial membrane with ubiquinol-cytochrome c oxidoreductase (cytochrome b-c1 complex, complex III, CIII). Heme is required as a cofactor. Requires Cu cation as cofactor.

Its subcellular location is the mitochondrion inner membrane. The catalysed reaction is 4 Fe(II)-[cytochrome c] + O2 + 8 H(+)(in) = 4 Fe(III)-[cytochrome c] + 2 H2O + 4 H(+)(out). It functions in the pathway energy metabolism; oxidative phosphorylation. Its function is as follows. Component of the cytochrome c oxidase, the last enzyme in the mitochondrial electron transport chain which drives oxidative phosphorylation. The respiratory chain contains 3 multisubunit complexes succinate dehydrogenase (complex II, CII), ubiquinol-cytochrome c oxidoreductase (cytochrome b-c1 complex, complex III, CIII) and cytochrome c oxidase (complex IV, CIV), that cooperate to transfer electrons derived from NADH and succinate to molecular oxygen, creating an electrochemical gradient over the inner membrane that drives transmembrane transport and the ATP synthase. Cytochrome c oxidase is the component of the respiratory chain that catalyzes the reduction of oxygen to water. Electrons originating from reduced cytochrome c in the intermembrane space (IMS) are transferred via the dinuclear copper A center (CU(A)) of subunit 2 and heme A of subunit 1 to the active site in subunit 1, a binuclear center (BNC) formed by heme A3 and copper B (CU(B)). The BNC reduces molecular oxygen to 2 water molecules using 4 electrons from cytochrome c in the IMS and 4 protons from the mitochondrial matrix. This Strigomonas oncopelti (Parasitic flagellate) protein is Cytochrome c oxidase subunit 1 (COI).